Consider the following 353-residue polypeptide: Photosystem II D2 protein (353 aa).

Threonine 2 bears the N-acetylthreonine mark. The residue at position 2 (threonine 2) is a Phosphothreonine. Residues 41–61 (CAYFALGGWFTGTTFVTSWYT) traverse the membrane as a helical segment. Residue histidine 118 coordinates chlorophyll a. Residues 125–141 (GFMLRQFELARSVQLRP) form a helical membrane-spanning segment. Pheophytin a-binding residues include glutamine 130 and asparagine 143. The chain crosses the membrane as a helical span at residues 153 to 166 (VFVSVFFIYPLGQS). Histidine 198 contacts chlorophyll a. Residues 208 to 228 (AALLCAIHGATVENTLFEDGD) traverse the membrane as a helical segment. Positions 215 and 262 each coordinate a plastoquinone. Histidine 215 is a binding site for Fe cation. Residue histidine 269 coordinates Fe cation. A helical membrane pass occupies residues 279–295 (GLWMSALGVVGLALNLR).

This sequence belongs to the reaction center PufL/M/PsbA/D family. PSII is composed of 1 copy each of membrane proteins PsbA, PsbB, PsbC, PsbD, PsbE, PsbF, PsbH, PsbI, PsbJ, PsbK, PsbL, PsbM, PsbT, PsbX, PsbY, PsbZ, Psb30/Ycf12, at least 3 peripheral proteins of the oxygen-evolving complex and a large number of cofactors. It forms dimeric complexes. Requires The D1/D2 heterodimer binds P680, chlorophylls that are the primary electron donor of PSII, and subsequent electron acceptors. It shares a non-heme iron and each subunit binds pheophytin, quinone, additional chlorophylls, carotenoids and lipids. There is also a Cl(-1) ion associated with D1 and D2, which is required for oxygen evolution. The PSII complex binds additional chlorophylls, carotenoids and specific lipids. as cofactor.

It localises to the plastid membrane. The enzyme catalyses 2 a plastoquinone + 4 hnu + 2 H2O = 2 a plastoquinol + O2. In terms of biological role, photosystem II (PSII) is a light-driven water:plastoquinone oxidoreductase that uses light energy to abstract electrons from H(2)O, generating O(2) and a proton gradient subsequently used for ATP formation. It consists of a core antenna complex that captures photons, and an electron transfer chain that converts photonic excitation into a charge separation. The D1/D2 (PsbA/PsbD) reaction center heterodimer binds P680, the primary electron donor of PSII as well as several subsequent electron acceptors. D2 is needed for assembly of a stable PSII complex. This Cuscuta exaltata (Tall dodder) protein is Photosystem II D2 protein.